A 426-amino-acid polypeptide reads, in one-letter code: Mediator of RNA polymerase II transcription subunit 4 (426 aa).

A disordered region spans residues 1-56 (MLQHQIVQSPARLGLTGPGSPSVQNPTPTRHGHPTSSSSSQSQHQQIQQQPNLLPS). Polar residues predominate over residues 19–28 (GSPSVQNPTP). A compositionally biased stretch (low complexity) spans 36–56 (SSSSSQSQHQQIQQQPNLLPS). Residues 160–212 (TELQEILDLQDAKQKVAREIKSKDSSLLAFANKLKDAERVLDMLVDDYSDYRK) are a coiled coil. Disordered regions lie at residues 214–236 (KRSK…STTV) and 373–426 (IAAP…DDED). Residues 406–426 (ILEDDDSSDYSSDDASSDDED) show a composition bias toward acidic residues.

The protein belongs to the Mediator complex subunit 4 family. Component of the Mediator complex.

It localises to the nucleus. Component of the Mediator complex, a coactivator involved in the regulated transcription of nearly all RNA polymerase II-dependent genes. Mediator functions as a bridge to convey information from gene-specific regulatory proteins to the basal RNA polymerase II transcription machinery. The Mediator complex, having a compact conformation in its free form, is recruited to promoters by direct interactions with regulatory proteins and serves for the assembly of a functional preinitiation complex with RNA polymerase II and the general transcription factors. This is Mediator of RNA polymerase II transcription subunit 4 (MED4) from Arabidopsis thaliana (Mouse-ear cress).